The following is a 327-amino-acid chain: Ubiquinone biosynthesis protein COQ4, mitochondrial (327 aa).

His-208, Asp-209, His-212, and Glu-224 together coordinate Zn(2+).

This sequence belongs to the COQ4 family. Component of a multi-subunit COQ enzyme complex, composed of at least COQ3, COQ4, COQ5, COQ6, COQ7 and COQ9. Zn(2+) serves as cofactor.

It is found in the mitochondrion inner membrane. It carries out the reaction a 4-hydroxy-3-methoxy-5-(all-trans-polyprenyl)benzoate + H(+) = a 2-methoxy-6-(all-trans-polyprenyl)phenol + CO2. It participates in cofactor biosynthesis; ubiquinone biosynthesis. Functionally, lyase that catalyzes the C1-decarboxylation of 4-hydroxy-3-methoxy-5-(all-trans-polyprenyl)benzoic acid into 2-methoxy-6-(all-trans-polyprenyl)phenol during ubiquinone biosynthesis. In Lachancea thermotolerans (strain ATCC 56472 / CBS 6340 / NRRL Y-8284) (Yeast), this protein is Ubiquinone biosynthesis protein COQ4, mitochondrial.